A 79-amino-acid chain; its full sequence is Probable Fe(2+)-trafficking protein (79 aa).

This sequence belongs to the Fe(2+)-trafficking protein family. As to quaternary structure, monomer.

Could be a mediator in iron transactions between iron acquisition and iron-requiring processes, such as synthesis and/or repair of Fe-S clusters in biosynthetic enzymes. This is Probable Fe(2+)-trafficking protein from Blochmanniella floridana.